Consider the following 287-residue polypeptide: Large ribosomal subunit protein uL2 (287 aa).

Residues 221-287 (RGSVMNPCDH…SKRSRGGRDS (67 aa)) form a disordered region. Positions 258–287 (KTRKRNKPSNKFVLRKRRKTSKRSRGGRDS) are enriched in basic residues.

The protein belongs to the universal ribosomal protein uL2 family. In terms of assembly, part of the 50S ribosomal subunit. Forms a bridge to the 30S subunit in the 70S ribosome.

In terms of biological role, one of the primary rRNA binding proteins. Required for association of the 30S and 50S subunits to form the 70S ribosome, for tRNA binding and peptide bond formation. It has been suggested to have peptidyltransferase activity; this is somewhat controversial. Makes several contacts with the 16S rRNA in the 70S ribosome. The chain is Large ribosomal subunit protein uL2 from Synechococcus sp. (strain WH7803).